The chain runs to 457 residues: MQKYTSEARQLLALAIPVILAQVAQTAMGFVDTVMAGGYSATDMAAVAIGTSIWLPAILFGHGLLLALTPVIAQLNGSGRRERIAHQVRQGFWLAGFVSVLVMIVLWNAGYIIRSMHNIDPALADKAVGYLRALLWGAPGYLFFQVARNQCEGLAKTKPGMVMGFLGLLVNIPVNYIFIYGHFGMPELGGIGCGVATAAVYWVMFIAMLSYIKHARSMRDIRNETGFGKPDSVVMKRLIQLGLPIALALFFEVTLFAVVALLVSPLGIVDVAGHQIALNFSSLMFVLPMSLAAAVTIRVGYRLGQGSTLDAQTAARTGLGVGICMAVVTAIFTVTLRKHIALLYNDNPEVVALAAQLMLLAAVYQISDSIQVIGSGILRGYKDTRSIFFITFTAYWVLGLPSGYILALTDLVVDRMGPAGFWMGFIIGLTSAAVLMMLRMRYLQRQPSAIILQRAAR.

12 helical membrane passes run 11–31 (LLAL…MGFV), 53–73 (IWLP…PVIA), 93–113 (WLAG…GYII), 127–147 (AVGY…FQVA), 160–180 (GMVM…IFIY), 188–208 (LGGI…FIAM), 243–263 (LPIA…ALLV), 276–296 (IALN…AAVT), 314–334 (AART…IFTV), 350–370 (VVAL…SDSI), 387–407 (IFFI…YILA), and 418–438 (PAGF…LMML).

Belongs to the multi antimicrobial extrusion (MATE) (TC 2.A.66.1) family. MdtK subfamily.

Its subcellular location is the cell inner membrane. Multidrug efflux pump that functions probably as a Na(+)/drug antiporter. This is Multidrug resistance protein MdtK from Salmonella agona (strain SL483).